We begin with the raw amino-acid sequence, 584 residues long: Dihydroxyacetone kinase 1 (584 aa).

Ser-2 is modified (N-acetylserine). Residues Ser-2 and Ser-5 each carry the phosphoserine modification. The 347-residue stretch at 7 to 353 folds into the DhaK domain; it reads EVTDPVNSSL…LNAFTNAPGW (347 aa). Substrate-binding positions include 51–54, Lys-103, and Asp-108; that span reads GSGH. His-220 serves as the catalytic Tele-hemiaminal-histidine intermediate. Position 365 is a phosphoserine (Ser-365). The DhaL domain maps to 386 to 582; that stretch reads DKFAEWMKSG…LCEFLKGVQS (197 aa). Residues 415–418 and 459–460 each bind ATP; these read DGDC and TS. Residue Ser-512 is modified to Phosphoserine. Residues 514–515 and 567–569 each bind ATP; these read TM and DPG.

This sequence belongs to the dihydroxyacetone kinase (DAK) family.

It carries out the reaction dihydroxyacetone + ATP = dihydroxyacetone phosphate + ADP + H(+). The catalysed reaction is D-glyceraldehyde + ATP = D-glyceraldehyde 3-phosphate + ADP + H(+). It functions in the pathway polyol metabolism; glycerol fermentation; glycerone phosphate from glycerol (oxidative route): step 2/2. In terms of biological role, catalyzes both the phosphorylation of dihydroxyacetone and of glyceraldehyde. This is Dihydroxyacetone kinase 1 (DAK1) from Saccharomyces cerevisiae (strain ATCC 204508 / S288c) (Baker's yeast).